The following is a 304-amino-acid chain: Solute carrier family 25 member 34 (304 aa).

Solcar repeat units lie at residues 4-97 (VPPA…ACQA), 101-194 (QQPG…AKAW), and 204-295 (DSWL…LRKL). A run of 6 helical transmembrane segments spans residues 7 to 27 (AVDL…TNPL), 45 to 65 (TYPR…RADG), 98 to 120 (GLSQ…GAFV), 170 to 191 (VGGA…FASA), 206 to 226 (WLVA…VMTP), and 278 to 301 (LGPH…WGQH).

This sequence belongs to the mitochondrial carrier (TC 2.A.29) family.

Its subcellular location is the mitochondrion inner membrane. It catalyses the reaction a dicarboxylate(in) + sulfate(out) = a dicarboxylate(out) + sulfate(in). Functionally, putative antiporter that exchanges dicarboxylates and sulfur oxoanions across the inner membrane of mitochondria. The chain is Solute carrier family 25 member 34 (SLC25A34) from Bos taurus (Bovine).